The primary structure comprises 443 residues: Pentatricopeptide repeat-containing protein 6, mitochondrial (443 aa).

Residues 1–13 constitute a mitochondrion transit peptide; that stretch reads MRILGSLPNNIRK. 2 PPR repeats span residues 130–164 and 220–254; these read NIVDYTHILRVAMYTGNKHILEYIVARVKEKRIRP and NSTTYDYLMVGLSRDGKIREIYDLIDTVWGINENS.

It localises to the mitochondrion. In terms of biological role, mitochondrial RNA-binding protein required for the stability of the atp9 mRNA. In Schizosaccharomyces pombe (strain 972 / ATCC 24843) (Fission yeast), this protein is Pentatricopeptide repeat-containing protein 6, mitochondrial (ppr6).